Here is a 596-residue protein sequence, read N- to C-terminus: Elongation factor 4 (596 aa).

A tr-type G domain is found at 2 to 183; it reads ENIRNFSIIA…AIIERIPAPS (182 aa). GTP is bound by residues 14-19 and 130-133; these read DHGKST and NKID.

The protein belongs to the TRAFAC class translation factor GTPase superfamily. Classic translation factor GTPase family. LepA subfamily.

The protein localises to the cell inner membrane. The enzyme catalyses GTP + H2O = GDP + phosphate + H(+). Its function is as follows. Required for accurate and efficient protein synthesis under certain stress conditions. May act as a fidelity factor of the translation reaction, by catalyzing a one-codon backward translocation of tRNAs on improperly translocated ribosomes. Back-translocation proceeds from a post-translocation (POST) complex to a pre-translocation (PRE) complex, thus giving elongation factor G a second chance to translocate the tRNAs correctly. Binds to ribosomes in a GTP-dependent manner. In Nitratiruptor sp. (strain SB155-2), this protein is Elongation factor 4.